The primary structure comprises 190 residues: Cytoglobin (190 aa).

The interval 1–21 is disordered; it reads MEKVPGDMEIERRERNEELSE. The Globin domain maps to 18 to 167; the sequence is ELSEAERKAV…IYSHVTAAYK (150 aa). Cysteine 38 and cysteine 83 are disulfide-bonded. The heme b site is built by histidine 81 and histidine 113.

It belongs to the globin family. Monomeric. Homodimer; disulfide-linked in vitro. Also homooligomeric in vitro. Post-translationally, the formation of an intramolecular disulfide bond between cysteines Cys-38 and Cys-83 specifically enhances the nitrite reductase activity. Widely expressed (at protein level).

It localises to the cytoplasm. It is found in the nucleus. The enzyme catalyses Fe(II)-heme b-[protein] + nitric oxide + O2 = Fe(III)-heme b-[protein] + nitrate. It carries out the reaction Fe(III)-heme b-[protein] + nitric oxide + H2O = Fe(II)-heme b-[protein] + nitrite + 2 H(+). It catalyses the reaction 2 superoxide + 2 H(+) = H2O2 + O2. The catalysed reaction is H2O2 + AH2 = A + 2 H2O. The nitric oxide dioxygenase activity is activated by a reducing system composed of cytochrome b5, its upstream reductase CYB5R3 and NADH. Functionally, probable multifunctional globin with a hexacoordinated heme iron required for the catalysis of various reactions depending on redox condition of the cell as well as oxygen availability. Has a nitric oxide dioxygenase (NOD) activity and is most probably involved in cell-mediated and oxygen-dependent nitric oxide consumption. By scavenging this second messenger may regulate several biological processes including endothelium-mediated vasodilation and vascular tone. Under normoxic conditions functions as a nitric oxide dioxygenase (NOD) but under hypoxic conditions the globin may switch its function to that of a nitrite (NO2) reductase (NiR), generating nitric oxide. Could also have peroxidase and superoxide dismutase activities, detoxifying reactive oxygen species and protecting cells against oxidative stress. Also binds dioxygen with low affinity and could function as an oxygen sensor but has probably no function as a respiratory oxygen carrier. The sequence is that of Cytoglobin from Rattus norvegicus (Rat).